The primary structure comprises 1024 residues: MPSISHKPITAKLVAAPDATKLELSSYLYQQLFSDKPAEPYVAFEAPGIKWALYPASEDRSLPQYTCKADIRHVAGSLKKFMPVVLKRVNPVTIEHAIVTVPASQYETLNTPEQVLKALEPQLDKDRPVIRQGDVLLNGCRVRLCEPVNQGKVVKGTTKLTVAKEQETIQPADEAADVAFDIAEFLDFDTSVAKTRESTNLQVAPLEGAIPTPLSDRFDDCESRGFVKSETMSKLGVFSGDIVSIKTKNGAERVLRLFAYPEPNTVKYDVVYVSPILYHNIGDKEIEVTPNGETHKSVGEALDSVLEAAEEVKLARVLGPTTTDRTFQTAYHAGLQAYFKPVKRAVRVGDLIPIPFDSILARTIGEDPEMSHIPLEALAVKPDSVAWFQVTSLNGSEDPASKQYLVDSSQTKLIEGGTTSSAVIPTSVPWREYLGLDTLPKFGSEFAYADKIRNLVQISTSALSHAKLNTSVLLHSAKRGVGKSTVLRSVAAQCGISVFEISCFGLIGDNEAQTLGTLRAKLDRAYGCSPCVVVLQHLESIAKKSDQDGKDEGIVSKLVDVLADYSGHGVLLAATSNDPDKISEAIRSRFQFEIEIGVPSEPQRRQIFSHLTKSGPGGDSIRNAPISLRSDVSVENLALQSAGLTPPDLTAIVQTTRLRAIDRLNKLTKDSDTTLDDLLTLSHGTLQLTPSDFDDAIADARQKYSDSIGAPRIPNVGWDDVGGMEGVKKDILDTIETPLKYPHWFSDGVKKRSGILFYGPPGTGKTLLAKAIATTFSLNFFSVKGPELLNMYIGESEANVRRVFQKARDAKPCVVFFDELDSVAPQRGNQGDSGGVMDRIVSQLLAELDGMSTAGGEGVFVVGATNRPDLLDEALLRPGRFDKMLYLGISDTHEKQQTIMEALTRKFRLAADVSLEAISKRCPFTFTGADFYALCSDAMLNAMTRTANEVDAKIKLLNKNREEAGEEPVSIRWWFDHEATKSDIEVEVAQQDFEKAKDELSPSVSAEELQHYLKLRQQFEGGKK.

759–766 (GPPGTGKT) is an ATP binding site.

It belongs to the AAA ATPase family. As to quaternary structure, interacts with PEX1; forming the PEX1-PEX6 AAA ATPase complex, which is composed of a heterohexamer formed by a trimer of PEX1-PEX6 dimers.

It localises to the cytoplasm. The protein localises to the cytosol. Its subcellular location is the peroxisome membrane. The enzyme catalyses ATP + H2O = ADP + phosphate + H(+). Component of the PEX1-PEX6 AAA ATPase complex, a protein dislocase complex that mediates the ATP-dependent extraction of the PEX5 receptor from peroxisomal membranes, an essential step for PEX5 recycling. Specifically recognizes PEX5 monoubiquitinated at 'Cys-6', and pulls it out of the peroxisome lumen through the PEX2-PEX10-PEX12 retrotranslocation channel. Extraction by the PEX1-PEX6 AAA ATPase complex is accompanied by unfolding of the TPR repeats and release of bound cargo from PEX5. In Yarrowia lipolytica (strain CLIB 122 / E 150) (Yeast), this protein is Peroxisomal ATPase PEX6 (PEX6).